Consider the following 253-residue polypeptide: Triosephosphate isomerase (253 aa).

9–11 serves as a coordination point for substrate; that stretch reads NWK. The Electrophile role is filled by His-97. Glu-169 serves as the catalytic Proton acceptor. Substrate is bound by residues Gly-175, Ser-215, and 236–237; that span reads GG.

It belongs to the triosephosphate isomerase family. As to quaternary structure, homodimer.

Its subcellular location is the cytoplasm. It carries out the reaction D-glyceraldehyde 3-phosphate = dihydroxyacetone phosphate. The protein operates within carbohydrate biosynthesis; gluconeogenesis. Its pathway is carbohydrate degradation; glycolysis; D-glyceraldehyde 3-phosphate from glycerone phosphate: step 1/1. Functionally, involved in the gluconeogenesis. Catalyzes stereospecifically the conversion of dihydroxyacetone phosphate (DHAP) to D-glyceraldehyde-3-phosphate (G3P). This Staphylococcus aureus (strain NCTC 8325 / PS 47) protein is Triosephosphate isomerase.